We begin with the raw amino-acid sequence, 213 residues long: E3 ubiquitin-protein ligase NleG8 (213 aa).

The segment at 136-189 is RING/U-box domain; the sequence is CPITLCVPETGVFVKNARCSKVCSLYDISALTEMLRRNASHPLSREAFTPGMIV. A PDZ-binding motif motif is present at residues 211–213; it reads TRL.

It belongs to the NleG E3 ligase family. As to quaternary structure, interacts with host GOPC (human protein).

The protein resides in the secreted. It is found in the host cytoplasm. The enzyme catalyses S-ubiquitinyl-[E2 ubiquitin-conjugating enzyme]-L-cysteine + [acceptor protein]-L-lysine = [E2 ubiquitin-conjugating enzyme]-L-cysteine + N(6)-ubiquitinyl-[acceptor protein]-L-lysine.. In terms of biological role, effector proteins function to alter host cell physiology and promote bacterial survival in host tissues. This protein is an E3 ubiquitin-protein ligase that probably interferes with the host's ubiquitination pathway and targets host proteins for proteasomal degradation. Mice infected with a strain of bacteria deleted for this gene had an increased survival rate. Can be ubiquitinylated, and ubiquitinate ubiquitin, giving rise to polyubiquitin chains (in vitro). This is E3 ubiquitin-protein ligase NleG8 from Citrobacter rodentium.